Consider the following 462-residue polypeptide: Malonyl-coenzyme:anthocyanin 5-O-glucoside-6'''-O-malonyltransferase (462 aa).

Active-site proton acceptor residues include H167 and D390.

Belongs to the plant acyltransferase family. In terms of tissue distribution, detected in petals and sepals, and at lower levels in bracts and red stems.

It catalyses the reaction pelargonidin 3-O-(6-O-[(E)-caffeoyl]-beta-D-glucoside) 5-O-beta-D-glucoside + malonyl-CoA = 4'''-demalonylsalvianin + CoA. It participates in pigment biosynthesis; anthocyanin biosynthesis. With respect to regulation, completely inhibited by 10 mM p-coumaric acid, this inhibition is rapid, reversible and non-competitive. Completely inhibited by 0.1 mM Cu(2+), 0.1 mM Hg(2+) and 10 mM caffeic acid. Partially inhibited by 5 mM N-ethylmaleimide, 1 mM diethylpyrocarbonate and 1 mM acetyl-CoA. In terms of biological role, catalyzes the transfer of a malonyl group from malonyl-CoA to the 6'''-hydroxyl group of the 5-glucosyl moiety of anthocyanins. Active towards bisdemalonylsalvianin (pelargonidin 3-O-(6-caffeoyl-beta-D-glucoside) 5-O-beta-D-glucoside) and shisonin, but not towards nodemalonylsalvianin, salvianin, pelargonidin 3,5-diglucoside and delphinidin 3,5-diglucoside. The protein is Malonyl-coenzyme:anthocyanin 5-O-glucoside-6'''-O-malonyltransferase of Salvia splendens (Scarlet sage).